The primary structure comprises 423 residues: Glycine amidinotransferase, mitochondrial (423 aa).

The transit peptide at 1-48 (MLRVRCLRGGSRGAEAVHYIGSRLGRTLTGWVQRTFQSTQAATASSRN) directs the protein to the mitochondrion. A compositionally biased stretch (low complexity) spans 39-51 (TQAATASSRNSSA). The interval 39–65 (TQAATASSRNSSAADDKATEPLPKDCP) is disordered. Ser46 and Ser49 each carry phosphoserine. Over residues 52 to 61 (ADDKATEPLP) the composition is skewed to basic and acidic residues. Position 170 (Asp170) interacts with arginine. Active-site residues include Asp254 and His303. Arginine-binding residues include Asp305, Arg322, Ser354, and Ser355. An N6-acetyllysine modification is found at Lys385. Cys407 acts as the Amidino-cysteine intermediate in catalysis.

It belongs to the amidinotransferase family. As to quaternary structure, homodimer.

The protein resides in the mitochondrion inner membrane. It catalyses the reaction L-arginine + glycine = guanidinoacetate + L-ornithine. The catalysed reaction is 4-aminobutanoate + L-arginine = 4-guanidinobutanoate + L-ornithine. The enzyme catalyses beta-alanine + L-arginine = 3-guanidinopropanoate + L-ornithine. It carries out the reaction taurine + L-arginine = taurocyamine + L-ornithine. It functions in the pathway amine and polyamine biosynthesis; creatine biosynthesis; creatine from L-arginine and glycine: step 1/2. Transamidinase that catalyzes the transfer of the amidino group of L-arginine onto the amino moiety of acceptor metabolites such as glycine, beta-alanine, gamma-aminobutyric acid (GABA) and taurine yielding the corresponding guanidine derivatives. Catalyzes the rate-limiting step of creatine biosynthesis, namely the transfer of the amidino group from L-arginine to glycine to generate guanidinoacetate, which is then methylated by GAMT to form creatine. Provides creatine as a source for ATP generation in tissues with high energy demands, in particular skeletal muscle, heart and brain. This is Glycine amidinotransferase, mitochondrial (GATM) from Pongo abelii (Sumatran orangutan).